Here is a 396-residue protein sequence, read N- to C-terminus: Flavohemoprotein (396 aa).

The Globin domain maps to 1–136; it reads MLDAQTIATV…LANVFIHREA (136 aa). Histidine 85 is a heme b binding site. Active-site charge relay system residues include tyrosine 95 and glutamate 135. A reductase region spans residues 147–396; that stretch reads GGWEGTRPFR…YECFGPHKVL (250 aa). In terms of domain architecture, FAD-binding FR-type spans 150 to 255; sequence EGTRPFRIVA…AAPAGDFFMN (106 aa). FAD is bound by residues tyrosine 188 and 204–207; that span reads RQYS. 268 to 273 contacts NADP(+); the sequence is GVGQTP. 389–392 is an FAD binding site; it reads CFGP.

This sequence belongs to the globin family. Two-domain flavohemoproteins subfamily. The protein in the C-terminal section; belongs to the flavoprotein pyridine nucleotide cytochrome reductase family. Monomer. Heme b is required as a cofactor. Requires FAD as cofactor.

It catalyses the reaction 2 nitric oxide + NADPH + 2 O2 = 2 nitrate + NADP(+) + H(+). The catalysed reaction is 2 nitric oxide + NADH + 2 O2 = 2 nitrate + NAD(+) + H(+). Its function is as follows. Is involved in NO detoxification in an aerobic process, termed nitric oxide dioxygenase (NOD) reaction that utilizes O(2) and NAD(P)H to convert NO to nitrate, which protects the bacterium from various noxious nitrogen compounds. Therefore, plays a central role in the inducible response to nitrosative stress. This is Flavohemoprotein (hmp) from Salmonella typhimurium (strain LT2 / SGSC1412 / ATCC 700720).